Reading from the N-terminus, the 213-residue chain is Probable transaldolase (213 aa).

K83 acts as the Schiff-base intermediate with substrate in catalysis.

This sequence belongs to the transaldolase family. Type 3B subfamily.

The protein resides in the cytoplasm. The catalysed reaction is D-sedoheptulose 7-phosphate + D-glyceraldehyde 3-phosphate = D-erythrose 4-phosphate + beta-D-fructose 6-phosphate. It participates in carbohydrate degradation; pentose phosphate pathway; D-glyceraldehyde 3-phosphate and beta-D-fructose 6-phosphate from D-ribose 5-phosphate and D-xylulose 5-phosphate (non-oxidative stage): step 2/3. Transaldolase is important for the balance of metabolites in the pentose-phosphate pathway. In Geobacillus sp. (strain WCH70), this protein is Probable transaldolase.